The primary structure comprises 77 residues: DNA-directed RNA polymerase subunit omega (77 aa).

This sequence belongs to the RNA polymerase subunit omega family. In cyanobacteria the RNAP catalytic core is composed of 2 alpha, 1 beta, 1 beta', 1 gamma and 1 omega subunit. When a sigma factor is associated with the core the holoenzyme is formed, which can initiate transcription.

It carries out the reaction RNA(n) + a ribonucleoside 5'-triphosphate = RNA(n+1) + diphosphate. Its function is as follows. Promotes RNA polymerase assembly. Latches the N- and C-terminal regions of the beta' subunit thereby facilitating its interaction with the beta and alpha subunits. This is DNA-directed RNA polymerase subunit omega from Thermosynechococcus vestitus (strain NIES-2133 / IAM M-273 / BP-1).